The following is a 294-amino-acid chain: Protein huluwa (294 aa).

At M1 to A23 the chain is on the extracellular side. Residues L24–V44 form a helical membrane-spanning segment. The Cytoplasmic segment spans residues G45–V294. The tract at residues S154–P175 is disordered. The VPPNSP motif motif lies at V164–P169. The SLRRSST motif signature appears at S184–T190.

It belongs to the huluwa family. Interacts with axin1; leading to promote the tankyrase-mediated degradation of axin. Interacts with axin2; leading to promote the tankyrase-mediated degradation of axin.

The protein resides in the cell membrane. In terms of biological role, key maternal determinant of the dorsal organizer and body axis formation in vertebrates that acts by promoting stabilization of beta-catenin (ctnnb1). Localizes on the plasma membrane of the future dorsal blastomeres in early blastulas and binds to and promotes the tankyrase-mediated degradation of axin (axin1 and axin2). Axin degradation results in stabilization and nuclear translocation of beta-catenin (ctnnb1) for activating organizer-specific target gene expression. The polypeptide is Protein huluwa (Danio rerio (Zebrafish)).